Reading from the N-terminus, the 172-residue chain is Small ribosomal subunit protein uS5 (172 aa).

The 64-residue stretch at 17-80 (LKEKMIAINR…EEARRNMTKV (64 aa)) folds into the S5 DRBM domain.

The protein belongs to the universal ribosomal protein uS5 family. In terms of assembly, part of the 30S ribosomal subunit. Contacts proteins S4 and S8.

Functionally, with S4 and S12 plays an important role in translational accuracy. Located at the back of the 30S subunit body where it stabilizes the conformation of the head with respect to the body. The sequence is that of Small ribosomal subunit protein uS5 from Polaromonas naphthalenivorans (strain CJ2).